A 309-amino-acid polypeptide reads, in one-letter code: Pyridoxal 5'-phosphate synthase subunit PDX1.1 (309 aa).

Position 1 is an N-acetylmethionine (M1). Residue D41 coordinates D-ribose 5-phosphate. Residue K98 is the Schiff-base intermediate with D-ribose 5-phosphate of the active site. G170 contacts D-ribose 5-phosphate. Position 182 (R182) interacts with D-glyceraldehyde 3-phosphate. D-ribose 5-phosphate is bound by residues G231 and 252–253; that span reads GS.

This sequence belongs to the PdxS/SNZ family. As to quaternary structure, homodimer or heterodimer with PDX1.2 or PDX1.3. Interacts with PDX2. Expressed in flowers, shoots, leaves and weakly in roots.

Its subcellular location is the cytoplasm. The catalysed reaction is aldehydo-D-ribose 5-phosphate + D-glyceraldehyde 3-phosphate + L-glutamine = pyridoxal 5'-phosphate + L-glutamate + phosphate + 3 H2O + H(+). Its pathway is cofactor biosynthesis; pyridoxal 5'-phosphate biosynthesis. Catalyzes the formation of pyridoxal 5'-phosphate from ribose 5-phosphate (RBP), glyceraldehyde 3-phosphate (G3P) and ammonia. The ammonia is provided by PDX2. Can also use ribulose 5-phosphate and dihydroxyacetone phosphate as substrates, resulting from enzyme-catalyzed isomerization of RBP and G3P, respectively. Also plays an indirect role in resistance to singlet oxygen-generating photosensitizers. The sequence is that of Pyridoxal 5'-phosphate synthase subunit PDX1.1 (PDX11) from Arabidopsis thaliana (Mouse-ear cress).